The sequence spans 219 residues: MSMECVVQGIIETQHVEALEILLQGLCGVQRERLRVHELCLRSGPNLGVVSSEVRLLCDLDQPEPTWTVKHVGGAMRGAGADQISVLVRNMIESKVSKNALRMFYALGYKLDHELLKVGFAFHFQRTAHISVSVSSVNKMPKVHAIDEAVPVTPGMQIVDVTAPATSENYSEVAAAVSSFCEFLAPLVHLSKPSISTGVVPTAAAAAASLMSDGGGTTL.

The protein belongs to the Mediator complex subunit 18 family. Component of the Mediator complex. Interacts with YY1 to suppress disease susceptibility via the repression of genes glutaredoxins GRX480, GRXS13 and thioredoxin TRX-h5. Binds to ABI4 to regulate abscisic acid responses; recruited by ABI4 to ABI5 promoter in the presence of abscisic acid (ABA). Interacts with SUF4 to regulate flowering time; recruited by SUF4 to FLC promoter.

It is found in the nucleus. In terms of biological role, component of the Mediator complex, a coactivator involved in the regulated transcription of nearly all RNA polymerase II-dependent genes. Mediator functions as a bridge to convey information from gene-specific regulatory proteins to the basal RNA polymerase II transcription machinery. The Mediator complex, having a compact conformation in its free form, is recruited to promoters by direct interactions with regulatory proteins and serves for the assembly of a functional pre-initiation complex with RNA polymerase II and the general transcription factors. Involved in the regulation of histone H3 lysine tri-methylation (H3K36me3). Associates with the promoter, coding and terminator regions of target genes suggesting its function in transcription initiation, elongation and termination. Multifunctional protein which regulates plant immunity, especially during necrotrophic fungal infection (e.g. B.cinerea and A.brassicicola), flowering time and responses to hormones (e.g. abscisic acid ABA and ethylene) through interactions with distinct transcription factors. This is Mediator of RNA polymerase II transcription subunit 18 from Arabidopsis thaliana (Mouse-ear cress).